The chain runs to 597 residues: Gamma-terpinene synthase, chloroplastic (597 aa).

The transit peptide at 1-47 directs the protein to the chloroplast; that stretch reads MATLSMQVSILSKQVKNLNSFGMRASKLPMVARRVDVSTTRLRPICS. D350 and D354 together coordinate Mn(2+). Positions 350–354 match the DDXXD motif motif; that stretch reads DDVYD. Homodimerization stretches follow at residues 356-362 and 428-465; these read YGTLDEL and EAKWYYAGYTPTLAEYLENAKVSISSPTIISQVYFTLP. Positions 494 and 502 each coordinate Mn(2+).

The protein belongs to the terpene synthase family. In terms of assembly, homodimer. Mn(2+) is required as a cofactor. The cofactor is Mg(2+).

Its subcellular location is the plastid. It is found in the chloroplast. It catalyses the reaction (2E)-geranyl diphosphate = gamma-terpinene + diphosphate. It functions in the pathway secondary metabolite biosynthesis; terpenoid biosynthesis. In terms of biological role, involved in the biosynthesis of phenolic monoterpenes natural products thymol and carvacrol which have a broad range of biological activities acting as antimicrobial compounds, insecticides, antioxidants and pharmaceutical agents. Monoterpene synthase which catalyzes the conversion of geranyl diphosphate (GPP) to gamma-terpinene and minor amounts of other monoterpenes (e.g. alpha-thujene, alpha-terpinene, myrcene, sabinene, (+)-R-limonene, alpha-pinene and alpha-phellandrene). In Thymus caespititius (Cretan thyme), this protein is Gamma-terpinene synthase, chloroplastic.